Consider the following 347-residue polypeptide: Iron-sulfur cluster assembly protein SufC (347 aa).

The ABC transporter domain maps to 100-346 (LEIKDLHAIE…ENKGYSQFLK (247 aa)). Residue 134–141 (GRNGSGKS) participates in ATP binding.

Belongs to the ABC transporter superfamily. Ycf16 family. In terms of assembly, component of a complex composed of SufB, SufC and SufD in a stoichiometric ratio of 1:2:1. Interacts with SufB. Interacts with SufD; the interaction enhances the ATPase activity of SufC. Post-translationally, proteolytically cleaved.

The protein resides in the plastid. Its subcellular location is the apicoplast. The catalysed reaction is ATP + H2O = ADP + phosphate + H(+). Its pathway is cofactor biosynthesis; iron-sulfur cluster biosynthesis. Participates in the sulfur mobilization (SUF) pathway for iron-sulfur (Fe-S) cluster biogenesis. As part of a complex consisting of SufB-SufC(2)-SufD, involved in assembly of [4Fe-4S] clusters. Exhibits ATPase activity. In Plasmodium falciparum (isolate 3D7), this protein is Iron-sulfur cluster assembly protein SufC.